Consider the following 310-residue polypeptide: Probable manganese-dependent inorganic pyrophosphatase (310 aa).

Residues His9, Asp13, Asp15, Asp75, His97, and Asp149 each contribute to the Mn(2+) site.

It belongs to the PPase class C family. It depends on Mn(2+) as a cofactor.

It localises to the cytoplasm. The catalysed reaction is diphosphate + H2O = 2 phosphate + H(+). This chain is Probable manganese-dependent inorganic pyrophosphatase, found in Bacillus cytotoxicus (strain DSM 22905 / CIP 110041 / 391-98 / NVH 391-98).